The sequence spans 533 residues: Probable ribonuclease ZC3H12D (533 aa).

Positions 92-246 (LRPIVIDGSN…PLGRRGPTLS (155 aa)) constitute an RNase NYN domain. Residues 251 to 282 (KKPRPPEPSWQHCPYGKKCTYGVKCRFYHPER) form a C3H1-type zinc finger. Residues 262–368 (HCPYGKKCTY…ASGVVSQSRG (107 aa)) are necessary for interaction with ZC3H12A. The tract at residues 302 to 335 (LGGGAEEPRTPSARSRPTTARLLPQEPGEHDLPP) is disordered.

This sequence belongs to the ZC3H12 family. In terms of assembly, interacts with ZC3H12A. Requires Mg(2+) as cofactor. Expressed at low levels in bone marrow derived macrophages.

It is found in the cytoplasm. The protein resides in the P-body. May regulate cell growth likely by suppressing RB1 phosphorylation. May function as RNase and regulate the levels of target RNA species (Potential). In association with ZC3H12A enhances the degradation of interleukin IL-6 mRNA level in activated macrophages. Serve as a tumor suppressor in certain leukemia cells. Overexpression inhibits the G1 to S phase progression through suppression of RB1 phosphorylation. This Mus musculus (Mouse) protein is Probable ribonuclease ZC3H12D.